The sequence spans 244 residues: Precorrin-6A reductase (244 aa).

It belongs to the precorrin-6x reductase family.

The enzyme catalyses precorrin-6B + NADP(+) = precorrin-6A + NADPH + 2 H(+). The protein operates within cofactor biosynthesis; adenosylcobalamin biosynthesis; cob(II)yrinate a,c-diamide from precorrin-2 (aerobic route): step 6/10. Catalyzes the reduction of the macrocycle of precorrin-6X into precorrin-6Y. The chain is Precorrin-6A reductase (cobK) from Mycobacterium tuberculosis (strain CDC 1551 / Oshkosh).